A 693-amino-acid chain; its full sequence is Golgin subfamily A member 6B (693 aa).

The segment covering 1-11 (MWPQPYLPPHP) has biased composition (pro residues). 4 disordered regions span residues 1 to 72 (MWPQ…SQYQ), 497 to 551 (LPGE…VERR), 629 to 650 (NPAD…AGEQ), and 660 to 679 (NNVE…DNPT). A coiled-coil region spans residues 77–611 (ALESSSVTIS…KLLELQELVL (535 aa)). Basic and acidic residues predominate over residues 537-551 (LPKEKADGTEQVERR).

The protein belongs to the GOLGA6 family.

The protein is Golgin subfamily A member 6B (GOLGA6B) of Homo sapiens (Human).